We begin with the raw amino-acid sequence, 431 residues long: Adenylosuccinate synthetase (431 aa).

Residues 13–19 and 41–43 contribute to the GTP site; these read GDEGKGK and GHT. Residue D14 is the Proton acceptor of the active site. Mg(2+) contacts are provided by D14 and G41. IMP contacts are provided by residues 14–17, 39–42, T130, R144, Q225, T240, and R304; these read DEGK and NAGH. H42 acts as the Proton donor in catalysis. 300 to 306 serves as a coordination point for substrate; the sequence is ATTGRAR. Residues R306, 332-334, and 414-416 each bind GTP; these read KLD and STG.

Belongs to the adenylosuccinate synthetase family. In terms of assembly, homodimer. Mg(2+) serves as cofactor.

The protein localises to the cytoplasm. The enzyme catalyses IMP + L-aspartate + GTP = N(6)-(1,2-dicarboxyethyl)-AMP + GDP + phosphate + 2 H(+). It participates in purine metabolism; AMP biosynthesis via de novo pathway; AMP from IMP: step 1/2. Plays an important role in the de novo pathway of purine nucleotide biosynthesis. Catalyzes the first committed step in the biosynthesis of AMP from IMP. The sequence is that of Adenylosuccinate synthetase from Chromohalobacter salexigens (strain ATCC BAA-138 / DSM 3043 / CIP 106854 / NCIMB 13768 / 1H11).